A 202-amino-acid chain; its full sequence is Adenosylcobalamin/alpha-ribazole phosphatase (202 aa).

His8 functions as the Tele-phosphohistidine intermediate in the catalytic mechanism. Glu81 (proton donor/acceptor) is an active-site residue.

It belongs to the phosphoglycerate mutase family.

The catalysed reaction is adenosylcob(III)alamin 5'-phosphate + H2O = adenosylcob(III)alamin + phosphate. It catalyses the reaction alpha-ribazole 5'-phosphate + H2O = alpha-ribazole + phosphate. Its pathway is nucleoside biosynthesis; alpha-ribazole biosynthesis; alpha-ribazole from 5,6-dimethylbenzimidazole: step 2/2. In terms of biological role, catalyzes the conversion of adenosylcobalamin 5'-phosphate to adenosylcobalamin (vitamin B12); involved in the assembly of the nucleotide loop of cobalamin. Also catalyzes the hydrolysis of the phospho group from alpha-ribazole 5'-phosphate to form alpha-ribazole. The polypeptide is Adenosylcobalamin/alpha-ribazole phosphatase (cobC) (Salmonella typhi).